The following is a 231-amino-acid chain: Cytidylate kinase (231 aa).

17–25 (GPTASGKGT) is an ATP binding site.

Belongs to the cytidylate kinase family. Type 1 subfamily.

The protein localises to the cytoplasm. It catalyses the reaction CMP + ATP = CDP + ADP. The catalysed reaction is dCMP + ATP = dCDP + ADP. The chain is Cytidylate kinase from Ralstonia pickettii (strain 12J).